A 360-amino-acid polypeptide reads, in one-letter code: Probable L-asparaginase 1 (360 aa).

An N-terminal signal peptide occupies residues 1–16 (MWRSIISFLFFSVALC). Residues N27, N35, and N40 are each glycosylated (N-linked (GlcNAc...) asparagine). The 321-residue stretch at 39 to 359 (PNVTIFAMGG…QNITDIFSLE (321 aa)) folds into the Asparaginase/glutaminase domain. T49 functions as the O-isoaspartyl threonine intermediate in the catalytic mechanism. N82 carries an N-linked (GlcNAc...) asparagine glycan. S96 provides a ligand contact to substrate. The N-linked (GlcNAc...) asparagine glycan is linked to N106. 129–130 (TD) lines the substrate pocket. N-linked (GlcNAc...) asparagine glycosylation is found at N144, N179, N246, N302, and N351.

The protein belongs to the asparaginase 1 family.

The protein resides in the secreted. It localises to the cell wall. The enzyme catalyses L-asparagine + H2O = L-aspartate + NH4(+). This chain is Probable L-asparaginase 1, found in Schizosaccharomyces pombe (strain 972 / ATCC 24843) (Fission yeast).